Reading from the N-terminus, the 238-residue chain is B-box zinc finger protein 25 (238 aa).

Positions 5, 8, 28, 33, 57, 60, 80, and 85 each coordinate Zn(2+). Residues 5–47 form a B box-type 1; atypical zinc finger; sequence CDVCEKAPATLICCADEAALCAKCDVEVHAANKLASKHQRLFL. The B box-type 2; atypical zinc-finger motif lies at 57 to 99; it reads CDICLEKAAFIFCVEDRALLCRDCDEATHAPNTRSANHQRFLA. The tract at residues 115 to 139 is disordered; sequence VEKNHFDPSNQQSLSKPPTQQPAAP. Residues 121–137 show a composition bias toward polar residues; the sequence is DPSNQQSLSKPPTQQPA. The interaction with COP1 stretch occupies residues 226–238; sequence DDEEEHFLVPDLG.

In terms of assembly, interacts with COP1 WD40 domain. Interacts with HY5 and HYH. In terms of processing, COP1-mediated ubiquitination and subsequent proteasomal degradation of BBX25/STH occurs in the dark.

The protein resides in the nucleus. Its function is as follows. Acts as a negative regulator of seedling photomorphogenesis. BBX25/STH and BBX24/STO function as transcriptional corepressors of HY5 activity, leading to the down-regulation of BBX22 expression. BBX25/STH acts additively with BBX24/STO during de-etiolation and the hypocotyl shade avoidance response. The sequence is that of B-box zinc finger protein 25 from Arabidopsis thaliana (Mouse-ear cress).